Consider the following 223-residue polypeptide: Glutathione S-transferase Z2 (223 aa).

In terms of domain architecture, GST N-terminal spans 10 to 91 (AKLKLYSYWR…YLDDKYPEPP (82 aa)). Glutathione is bound by residues 20–21 (SS), 20–25 (SSCAHR), glutamine 49, 49–50 (QS), 62–63 (TV), valine 63, 75–76 (DS), glutamine 115, and 119–121 (NMA). One can recognise a GST C-terminal domain in the interval 96 to 221 (DYHKRAVNYQ…VPEKQPDTPS (126 aa)).

This sequence belongs to the GST superfamily. Zeta family.

It is found in the cytoplasm. The protein resides in the cytosol. It catalyses the reaction RX + glutathione = an S-substituted glutathione + a halide anion + H(+). Its function is as follows. May be involved in the conjugation of reduced glutathione to a wide number of exogenous and endogenous hydrophobic electrophiles and have a detoxification role against certain herbicides. This chain is Glutathione S-transferase Z2 (GSTZ2), found in Arabidopsis thaliana (Mouse-ear cress).